Reading from the N-terminus, the 218-residue chain is Glutathione S-transferase Mu 1 (218 aa).

Residues 2–88 (PMTLGYWDVR…YLARKHGLCG (87 aa)) enclose the GST N-terminal domain. Glutathione is bound by residues 7–8 (YW), 46–50 (WLSEK), 59–60 (NL), and 72–73 (QS). The GST C-terminal domain occupies 90–208 (TEEERIRVDI…KSSRFIRVPV (119 aa)). Tyr116 contacts substrate.

Belongs to the GST superfamily. Mu family. Homodimer. As to expression, well expressed in rabbit liver, brain and kidney.

The protein resides in the cytoplasm. It catalyses the reaction RX + glutathione = an S-substituted glutathione + a halide anion + H(+). Conjugation of reduced glutathione to a wide number of exogenous and endogenous hydrophobic electrophiles. This chain is Glutathione S-transferase Mu 1, found in Oryctolagus cuniculus (Rabbit).